A 1575-amino-acid polypeptide reads, in one-letter code: Lysophospholipase NTE1 (1575 aa).

The disordered stretch occupies residues 1-56 (MNLTTTMPAAVAPDPPAQLAVSSRSLSDSSDAAGASRTSSSCRASSPSHCPTHAWN). Residues 1–99 (MNLTTTMPAA…TLSPPNLLQG (99 aa)) lie on the Cytoplasmic side of the membrane. Over residues 19–48 (LAVSSRSLSDSSDAAGASRTSSSCRASSPS) the composition is skewed to low complexity. A helical transmembrane segment spans residues 100 to 120 (IVSQLAMASYIGRLLLYLFQV). Residues 121–151 (VPSLLYWAITFTTITVPTALFTLFSMSLTFT) are Lumenal-facing. Residues 152–172 (MNFTTLLIIVLLLVSTVSWFI) traverse the membrane as a helical segment. The Cytoplasmic portion of the chain corresponds to 173–1575 (RYRFLNIYSR…RTMAPRRASI (1403 aa)). Disordered stretches follow at residues 339–425 (DMES…AKSV) and 568–587 (GSAS…VSPG). Residues 409–424 (RGHRRKRPSRPKRAKS) are compositionally biased toward basic residues. Residues 737–856 (GGTS…TSYR) and 894–1014 (RLTT…IAQR) each bind a nucleoside 3',5'-cyclic phosphate. Residues 1272–1436 (LVLGGGGARG…VDNLTVARMK (165 aa)) enclose the PNPLA domain. Residues 1276 to 1281 (GGGARG) carry the GXGXXG motif. The GXSXG motif lies at 1303 to 1307 (GTSIG). Ser-1305 (nucleophile) is an active-site residue. Asp-1423 serves as the catalytic Proton acceptor. Positions 1423 to 1425 (DGG) match the DGA/G motif.

The protein belongs to the NTE family.

Its subcellular location is the endoplasmic reticulum membrane. It catalyses the reaction a 1-acyl-sn-glycero-3-phosphocholine + H2O = sn-glycerol 3-phosphocholine + a fatty acid + H(+). Its activity is regulated as follows. Inhibited by organophosphorus esters. Functionally, intracellular phospholipase B that catalyzes the double deacylation of phosphatidylcholine (PC) to glycerophosphocholine (GroPCho). Plays an important role in membrane lipid homeostasis. Responsible for the rapid PC turnover in response to inositol, elevated temperatures, or when choline is present in the growth medium. In Coccidioides immitis (strain RS) (Valley fever fungus), this protein is Lysophospholipase NTE1 (NTE1).